Here is a 434-residue protein sequence, read N- to C-terminus: Indole diterpene prenyltransferase nodD2 (434 aa).

L-tryptophan-binding positions include 85 to 86 (LI) and Glu94. Positions 107, 194, 268, 270, 272, 351, 353, 418, and 422 each coordinate substrate.

It belongs to the tryptophan dimethylallyltransferase family.

The protein operates within secondary metabolite biosynthesis. Indole diterpene prenyltransferase; part of the gene cluster that mediates the biosynthesis of the indole diterpenes nodulisporic acids (NA). Nodulisporic acid A (NAA) and its chemically modified derivatives are of particular significance because of their highly potent insecticidal activity against blood-feeding arthropods and lack of observable adverse effects on mammals, in particular the tremogenicity associated with the paspaline-derived IDTs is not observed. The geranylgeranyl diphosphate (GGPP) synthase ggs1, localized outside of the cluster, is proposed to catalyze the first step in nodulisporic acid biosynthesis via conversion of farnesyl pyrophosphate and isopentyl pyrophosphate into geranylgeranyl pyrophosphate (GGPP). Condensation of indole-3-glycerol phosphate with GGPP by the prenyl transferase nodC then forms 3-geranylgeranylindole (3-GGI). Epoxidation by the FAD-dependent monooxygenase nodM leads to a single-epoxidized-GGI that is substrate of the terpene cyclase nodB for cyclization to yield emindole SB. The terminal methyl carbon, C28, of emindole SB is then oxidized by the cytochrome P450 monooxygenase nodW to produce nodulisporic acid F (NAF), the pentacyclic core of NAA. NAF is converted to nodulisporic acid E (NAE) via prenylation. This step is probably performed by one of the indole diterpene prenyltransferases nodD1 or nodD2. Several oxidation steps performed by the FAD-linked oxidoreductase nodO and one of the cytochrome P450 monooxygenase nodR, nodX or nodZ further convert NAE to nodulisporic acid D (NAD). NAD is substrate of cytochrome P450 monooxygenase nodJ to produce the precursor of nodulisporic acid C (NAC), converted to NAC by one of the indole diterpene prenyltransferases nodD1 or nodD2. The FAD-dependent monooxygenase nodY2 then oxidizes NAC to nodulisporic acid B (NAB). Finally NAB is converted to NAA by one of the cytochrome P450 monooxygenases nodR, nodX or nodZ. This Hypoxylon pulicicidum protein is Indole diterpene prenyltransferase nodD2.